The sequence spans 368 residues: Reverse transcriptase-like protein (368 aa).

The region spanning 91–318 is the Reverse transcriptase domain; the sequence is TRELTVPYWY…SELNWLGHKV (228 aa).

It localises to the mitochondrion. This chain is Reverse transcriptase-like protein (RTL), found in Chlamydomonas reinhardtii (Chlamydomonas smithii).